We begin with the raw amino-acid sequence, 401 residues long: Tyrosine--tRNA ligase (401 aa).

The 'HIGH' region motif lies at 42–51 (PTAPDLHLGH). Positions 226–230 (KMSKS) match the 'KMSKS' region motif. Lysine 229 contacts ATP. The region spanning 336 to 397 (IALAQLLKQI…GKRRIAKLSI (62 aa)) is the S4 RNA-binding domain.

The protein belongs to the class-I aminoacyl-tRNA synthetase family. TyrS type 2 subfamily. In terms of assembly, homodimer.

The protein resides in the cytoplasm. The catalysed reaction is tRNA(Tyr) + L-tyrosine + ATP = L-tyrosyl-tRNA(Tyr) + AMP + diphosphate + H(+). In terms of biological role, catalyzes the attachment of tyrosine to tRNA(Tyr) in a two-step reaction: tyrosine is first activated by ATP to form Tyr-AMP and then transferred to the acceptor end of tRNA(Tyr). The protein is Tyrosine--tRNA ligase of Legionella pneumophila subsp. pneumophila (strain Philadelphia 1 / ATCC 33152 / DSM 7513).